The chain runs to 604 residues: Phosphoprotein (604 aa).

2 disordered regions span residues methionine 1 to serine 22 and aspartate 39 to asparagine 360. The tract at residues serine 22 to glutamate 42 is N0 binding. Polar residues-rich tracts occupy residues asparagine 47–isoleucine 61 and lysine 74–glutamate 90. Residues cysteine 91–aspartate 101 show a composition bias toward basic and acidic residues. The span at glycine 129 to isoleucine 144 shows a compositional bias: polar residues. The segment covering asparagine 147–glutamine 163 has biased composition (basic and acidic residues). Residues threonine 197 to threonine 207 are compositionally biased toward polar residues. The span at lysine 245–proline 267 shows a compositional bias: basic and acidic residues. Low complexity-rich tracts occupy residues lysine 277–serine 300 and threonine 317–serine 328. Residues arginine 330–asparagine 360 are compositionally biased toward basic and acidic residues. A multimerization region spans residues valine 400 to threonine 470. Residues leucine 424–asparagine 451 adopt a coiled-coil conformation. Residues glutamate 450–glutamate 483 are l protein binding. The segment at lysine 585–cysteine 604 is interaction with the nucleocapsid (N-RNA).

It belongs to the respirovirus P protein family. As to quaternary structure, homotetramer. Interacts (via multimerization domain) with polymerase L; this interaction forms the polymerase L-P complex. Interacts (via N-terminus) with N0; this interaction allows P to chaperon N0 to avoid N polymerization before encapsidation. Interacts (via C-terminus) with N-RNA template; this interaction positions the polymerase on the template. Interacts with host PI4KB; this interaction allows P to recruit PI4KB to the viral factories to generate PI4P to facilitate viral replication.

Essential cofactor of the RNA polymerase L that plays a central role in the transcription and replication by forming the polymerase complex with RNA polymerase L and recruiting L to the genomic N-RNA template for RNA synthesis. Also plays a central role in the encapsidation of nascent RNA chains by forming the encapsidation complex with the nucleocapsid protein N (N-P complex). Acts as a chaperone for newly synthesized free N protein, so-called N0, allowing encapsidation of nascent RNA chains during replication. The nucleoprotein protein N prevents excessive phosphorylation of P, which leads to down-regulation of viral transcription/ replication. Participates, together with N, in the formation of viral factories (viroplasms), which are large inclusions in the host cytoplasm where replication takes place. Recruits host PI4KB and remodel the host endoplasmic reticulum membrane to form viral replication factories. The sequence is that of Phosphoprotein (P/V/D) from Human parainfluenza 3 virus (strain Wash/47885/57) (HPIV-3).